Reading from the N-terminus, the 348-residue chain is Isopentenyl-diphosphate delta-isomerase (348 aa).

9–10 contributes to the substrate binding site; sequence RK. FMN contacts are provided by residues 68–70, S98, and N127; that span reads AMT. Q157 serves as a coordination point for substrate. E158 contacts Mg(2+). FMN is bound by residues K188, S213, T218, and 286-287; that span reads AG.

The protein belongs to the IPP isomerase type 2 family. Homooctamer. Dimer of tetramers. FMN is required as a cofactor. Requires NADPH as cofactor. The cofactor is Mg(2+).

The protein resides in the cytoplasm. The enzyme catalyses isopentenyl diphosphate = dimethylallyl diphosphate. In terms of biological role, involved in the biosynthesis of isoprenoids. Catalyzes the 1,3-allylic rearrangement of the homoallylic substrate isopentenyl (IPP) to its allylic isomer, dimethylallyl diphosphate (DMAPP). The chain is Isopentenyl-diphosphate delta-isomerase from Limosilactobacillus reuteri (strain DSM 20016) (Lactobacillus reuteri).